Here is a 463-residue protein sequence, read N- to C-terminus: Cysteine--tRNA ligase (463 aa).

Cysteine 27 lines the Zn(2+) pocket. Positions 29–39 (ATVQGLPHIGH) match the 'HIGH' region motif. Zn(2+) contacts are provided by cysteine 205, histidine 230, and glutamate 234. Residues 261-265 (KMSKS) carry the 'KMSKS' region motif. Lysine 264 serves as a coordination point for ATP.

Belongs to the class-I aminoacyl-tRNA synthetase family. Monomer. The cofactor is Zn(2+).

The protein resides in the cytoplasm. It catalyses the reaction tRNA(Cys) + L-cysteine + ATP = L-cysteinyl-tRNA(Cys) + AMP + diphosphate. The polypeptide is Cysteine--tRNA ligase (Mycolicibacterium vanbaalenii (strain DSM 7251 / JCM 13017 / BCRC 16820 / KCTC 9966 / NRRL B-24157 / PYR-1) (Mycobacterium vanbaalenii)).